The primary structure comprises 332 residues: Autoinducer 2 import system permease protein LsrD (332 aa).

The next 10 helical transmembrane spans lie at 7–27 (YSWEIALAALLIFEILAFGVI), 45–65 (ICIGIVALPLTMVIVSGGMDI), 70–90 (TIGLCAITLGVLFQLGMPLPL), 91–111 (AIIITLLLGAICGLINAGLII), 118–138 (LVITLGTMYLFGGSALLLSGM), 162–182 (FLGIPMPLIFFLVCCLFFWLL), 216–236 (VYAMTGCASAIAAVLLVSYFG), 240–260 (SDLGASFLMPAITAVVLGGAN), 261–281 (IYGGSGSIMGSALAALLVGFL), and 288–308 (AGVPNQISSALSGALLIVVVV).

It belongs to the binding-protein-dependent transport system permease family. AraH/RbsC subfamily. The complex is composed of two ATP-binding proteins (LsrA), two transmembrane proteins (LsrC and LsrD) and a solute-binding protein (LsrB).

It localises to the cell inner membrane. In terms of biological role, part of the ABC transporter complex LsrABCD involved in autoinducer 2 (AI-2) import. Probably responsible for the translocation of the substrate across the membrane. The protein is Autoinducer 2 import system permease protein LsrD (lsrD) of Salmonella paratyphi A (strain ATCC 9150 / SARB42).